A 355-amino-acid polypeptide reads, in one-letter code: F-box only protein 32 (355 aa).

A Nuclear localization signal motif is present at residues 62 to 67 (KKRKKD). Positions 169 to 173 (LLQTL) match the Nuclear export signal motif. The region spanning 223–271 (LTFTDLPLCLQLNIMQRLSDGRDLVSLGQVAPDLHVLSEDRLLWKKLCQ) is the F-box domain. The Bipartite nuclear localization signal motif lies at 280-295 (RKRLILSDKGQLDWKK).

Part of the SCF (SKP1-CUL1-F-box) E3 ubiquitin-protein ligase complex SCF(FBXO32) formed of CUL1, SKP1, RBX1 and FBXO32.

The protein localises to the cytoplasm. Its subcellular location is the nucleus. It participates in protein modification; protein ubiquitination. Substrate recognition component of a SCF (SKP1-CUL1-F-box protein) E3 ubiquitin-protein ligase complex which mediates the ubiquitination and subsequent proteasomal degradation of target proteins. Probably recognizes and binds to phosphorylated target proteins during skeletal muscle atrophy. Recognizes TERF1. The polypeptide is F-box only protein 32 (FBXO32) (Sus scrofa (Pig)).